The following is a 55-amino-acid chain: MKYQLLKIIVCPVCHSKLSFDLEKKELICNVDNLAFPIRKGIPVLLKRDARNFIL.

The protein belongs to the UPF0434 family.

The protein is UPF0434 protein BPEN_388 of Blochmanniella pennsylvanica (strain BPEN).